Reading from the N-terminus, the 590-residue chain is Aspartate--tRNA(Asp/Asn) ligase (590 aa).

Glu169 is an L-aspartate binding site. The aspartate stretch occupies residues 193 to 196; sequence QLFK. Arg215 is an L-aspartate binding site. Residues 215–217 and Gln224 contribute to the ATP site; that span reads RDE. His447 is an L-aspartate binding site. Glu479 is a binding site for ATP. An L-aspartate-binding site is contributed by Arg486. 531 to 534 contacts ATP; sequence GWDR. A disordered region spans residues 556–590; the sequence is GGFDPLTAAPAPITPEQRKEAGVDARPQQDLPPQS.

The protein belongs to the class-II aminoacyl-tRNA synthetase family. Type 1 subfamily. Homodimer.

The protein resides in the cytoplasm. It catalyses the reaction tRNA(Asx) + L-aspartate + ATP = L-aspartyl-tRNA(Asx) + AMP + diphosphate. Functionally, aspartyl-tRNA synthetase with relaxed tRNA specificity since it is able to aspartylate not only its cognate tRNA(Asp) but also tRNA(Asn). Reaction proceeds in two steps: L-aspartate is first activated by ATP to form Asp-AMP and then transferred to the acceptor end of tRNA(Asp/Asn). The chain is Aspartate--tRNA(Asp/Asn) ligase from Nocardioides sp. (strain ATCC BAA-499 / JS614).